Reading from the N-terminus, the 199-residue chain is MKFSPLVDELIQSLRCLPGVGPKSAQRMAFQLLERDRKAGAKLADSLAKAMSEVGHCQSCRTFTEETYCPICVSTKRGHSEVICVVETPADVLAIEAGGHFSGRYFVLLGHLSPLDGVGPDELGLDLLEQHLATGDVSELILATNPTVEGDATAHYIADMAKRHQLTVSRIAHGVPVGGELEYVDSTTLALSFNGRLPM.

A C4-type zinc finger spans residues 57–72; that stretch reads CQSCRTFTEETYCPIC. The Toprim domain occupies 81–176; the sequence is EVICVVETPA…TVSRIAHGVP (96 aa).

This sequence belongs to the RecR family.

Its function is as follows. May play a role in DNA repair. It seems to be involved in an RecBC-independent recombinational process of DNA repair. It may act with RecF and RecO. This is Recombination protein RecR from Shewanella pealeana (strain ATCC 700345 / ANG-SQ1).